The sequence spans 347 residues: Bombesin receptor-activated protein C6orf89 (347 aa).

At 1 to 58 the chain is on the cytoplasmic side; sequence MDLAANEISIYDKLSETVDLVRQTGHQCGMSEKAIEKFIRQLLEKNEPQRPPPQYPLL. The helical transmembrane segment at 59–79 threads the bilayer; sequence IVVYKVLATLGLILLTAYFVI. The Extracellular portion of the chain corresponds to 80–347; that stretch reads QPFSPLAPEP…ICDGTAFSEL (268 aa).

As to quaternary structure, homodimer. Interacts with BRS3. Interacts (via N-terminus) with SIN3B. Post-translationally, glycosylated.

Its subcellular location is the golgi apparatus membrane. The protein localises to the midbody. It localises to the cytoplasm. It is found in the nucleus. The protein resides in the nucleolus. Its function is as follows. Exhibits histone deacetylase (HDAC) enhancer properties. May play a role in cell cycle progression and wound repair of bronchial epithelial cells. This is Bombesin receptor-activated protein C6orf89 (C6orf89) from Homo sapiens (Human).